The primary structure comprises 339 residues: Methionine import ATP-binding protein MetN 2 (339 aa).

The ABC transporter domain maps to 2 to 241 (ISFNNVSKVY…PKTKTTQNFV (240 aa)). 38–45 (GFSGAGKS) provides a ligand contact to ATP.

This sequence belongs to the ABC transporter superfamily. Methionine importer (TC 3.A.1.24) family. The complex is composed of two ATP-binding proteins (MetN), two transmembrane proteins (MetI) and a solute-binding protein (MetQ).

It localises to the cell membrane. It catalyses the reaction L-methionine(out) + ATP + H2O = L-methionine(in) + ADP + phosphate + H(+). The enzyme catalyses D-methionine(out) + ATP + H2O = D-methionine(in) + ADP + phosphate + H(+). In terms of biological role, part of the ABC transporter complex MetNIQ involved in methionine import. Responsible for energy coupling to the transport system. This Bacillus cereus (strain ATCC 10987 / NRS 248) protein is Methionine import ATP-binding protein MetN 2.